We begin with the raw amino-acid sequence, 760 residues long: Exostosin-1 (760 aa).

The Cytoplasmic segment spans residues 1–6 (MQAKKR). A helical; Signal-anchor for type II membrane protein membrane pass occupies residues 7 to 25 (YILVFVSCAFLAYAYFGGY). The Lumenal portion of the chain corresponds to 26–760 (RLKVSPLRPR…KYRQIELVGS (735 aa)). N-linked (GlcNAc...) asparagine glycans are attached at residues asparagine 71 and asparagine 327. Arginine 437 lines the UDP-N-acetyl-alpha-D-glucosamine pocket. The N-linked (GlcNAc...) asparagine glycan is linked to asparagine 476. Residues 540 to 560 (LGGSTRSQGAGPTSQTTEGRP) form a disordered region. Residues 541–560 (GGSTRSQGAGPTSQTTEGRP) are compositionally biased toward polar residues. UDP-N-acetyl-alpha-D-glucosamine contacts are provided by arginine 565, aspartate 581, glutamate 582, aspartate 583, glutamate 669, aspartate 670, and arginine 713. Aspartate 583 contacts Mn(2+). An intrachain disulfide couples cysteine 668 to cysteine 716. Aspartate 670 is a catalytic residue.

It belongs to the glycosyltransferase 47 family. Interacts with sau. The cofactor is Mn(2+). In terms of tissue distribution, ubiquitously expressed in early embryos. Later (in stage 10 embryos), it is expressed at higher level in the nervous system. Ubiquitously expressed in wing imaginal disk.

The protein resides in the endoplasmic reticulum membrane. It localises to the golgi apparatus membrane. The enzyme catalyses 3-O-{[(1-&gt;4)-beta-D-GlcA-(1-&gt;4)-alpha-D-GlcNAc](n)-(1-&gt;4)-beta-D-GlcA-(1-&gt;3)-beta-D-Gal-(1-&gt;3)-beta-D-Gal-(1-&gt;4)-beta-D-Xyl}-L-seryl-[protein] + UDP-N-acetyl-alpha-D-glucosamine = 3-O-{alpha-D-GlcNAc-[(1-&gt;4)-beta-D-GlcA-(1-&gt;4)-alpha-D-GlcNAc](n)-(1-&gt;4)-beta-D-GlcA-(1-&gt;3)-beta-D-Gal-(1-&gt;3)-beta-D-Gal-(1-&gt;4)-beta-D-Xyl}-L-seryl-[protein] + UDP + H(+). It carries out the reaction 3-O-{alpha-D-GlcNAc-[(1-&gt;4)-beta-D-GlcA-(1-&gt;4)-alpha-D-GlcNAc](n)-(1-&gt;4)-beta-D-GlcA-(1-&gt;3)-beta-D-Gal-(1-&gt;3)-beta-D-Gal-(1-&gt;4)-beta-D-Xyl}-L-seryl-[protein] + UDP-alpha-D-glucuronate = 3-O-{[(1-&gt;4)-beta-D-GlcA-(1-&gt;4)-alpha-D-GlcNAc](n+1)-(1-&gt;4)-beta-D-GlcA-(1-&gt;3)-beta-D-Gal-(1-&gt;3)-beta-D-Gal-(1-&gt;4)-beta-D-Xyl}-L-seryl-[protein] + UDP + H(+). It functions in the pathway protein modification; protein glycosylation. It participates in glycan metabolism; heparan sulfate biosynthesis. The protein operates within glycan metabolism; heparin biosynthesis. In terms of biological role, glycosyltransferase required for the biosynthesis of heparan-sulfate and responsible for the alternating addition of beta-1-4-linked glucuronic acid (GlcA) and alpha-1-4-linked N-acetylglucosamine (GlcNAc) units to nascent heparan sulfate chains. Botv is the trigger of heparan sulfate chain initiation and polymerization takes place by a complex of ttv and sotv. Plays a central role in the diffusion of morphogens hedgehog (hh), wingless (wg) and decapentaplegic (dpp) via its role in heparan sulfate proteoglycans (HSPGs) biosynthesis which are required for movement of hh, dpp and wg morphogens. The sequence is that of Exostosin-1 (ttv) from Drosophila melanogaster (Fruit fly).